The following is a 354-amino-acid chain: MEAATAPEVAAGSKLKVKEASPADAEPPQASPGQGAGSPTPQLLPPIEEHPKIWLPRALRQTYIRKVGDTVNLLIPFQGKPKPQAIWTHDGCALDTRRVSVRNGEQDSILFIREAQRADSGRYQLRVQLGGLEATATIDILVIERPGPPQSIKLVDVWGFSATLEWTPPQDTGNTALLGYTVQKADTKSGLWFTVLEHYHRTSCIVSDLIIGNSYAFRVFAENQCGLSETAPITTDLAHIQKAATVYKTKGFAQRDFSEAPKFTQPLADCTTVTGYNTQLFCCVRASPRPKIIWLKNKMDIQGNPKYRALTHLGICSLEIRKPGPFDGGIYTCKAVNPLGEASVDCRVDVKVPN.

The disordered stretch occupies residues 1–47 (MEAATAPEVAAGSKLKVKEASPADAEPPQASPGQGAGSPTPQLLPPI). Position 38 is a phosphoserine (Ser-38). Positions 45–139 (PPIEEHPKIW…GGLEATATID (95 aa)) constitute an Ig-like C2-type 1 domain. Residues 148–238 (PPQSIKLVDV…ETAPITTDLA (91 aa)) enclose the Fibronectin type-III domain. The region spanning 261–345 (PKFTQPLADC…VNPLGEASVD (85 aa)) is the Ig-like C2-type 2 domain. Residues Cys-282 and Cys-333 are joined by a disulfide bond. Arg-321 is modified (omega-N-methylarginine).

It belongs to the immunoglobulin superfamily. MyBP family. As to expression, expressed in heart, with higher expression in the atria. Expressed in left atrium and ventricle, arteria mammaria interna and skeletal muscle. In terms of tissue distribution, expressed specifically en the left atrium.

The protein resides in the cytoplasm. It is found in the myofibril. The protein localises to the sarcomere. Myosin-binding protein which plays a role in cardiac function. Seems to regulate conduction in the atria and ventricular conduction systems. The chain is Myosin-binding protein H-like from Homo sapiens (Human).